A 249-amino-acid polypeptide reads, in one-letter code: 5'-nucleotidase SurE (249 aa).

A divalent metal cation contacts are provided by aspartate 8, aspartate 9, serine 39, and asparagine 91.

It belongs to the SurE nucleotidase family. A divalent metal cation is required as a cofactor.

It is found in the cytoplasm. It catalyses the reaction a ribonucleoside 5'-phosphate + H2O = a ribonucleoside + phosphate. Functionally, nucleotidase that shows phosphatase activity on nucleoside 5'-monophosphates. The polypeptide is 5'-nucleotidase SurE (Pseudomonas putida (strain W619)).